We begin with the raw amino-acid sequence, 117 residues long: Large ribosomal subunit protein bL19 (117 aa).

It belongs to the bacterial ribosomal protein bL19 family.

This protein is located at the 30S-50S ribosomal subunit interface and may play a role in the structure and function of the aminoacyl-tRNA binding site. This chain is Large ribosomal subunit protein bL19, found in Vibrio parahaemolyticus serotype O3:K6 (strain RIMD 2210633).